A 1755-amino-acid polypeptide reads, in one-letter code: Transposon Ty1-MR2 Gag-Pol polyprotein (1755 aa).

Polar residues-rich tracts occupy residues 1–10 (MESQQLSNYP), 48–60 (TKANSQQTTTPAS), and 127–152 (QSQFPQYPSSVGTPLSTPSPESGNTF). Disordered regions lie at residues 1-93 (MESQ…MMTQ), 126-173 (PQSQ…RPPP), and 352-421 (GSRN…SKST). Over residues 153–165 (TDSSSADSDMTST) the composition is skewed to low complexity. The segment at 299-401 (NNGIHINNKV…NSKSKTARAH (103 aa)) is RNA-binding. Residues 402 to 418 (NVSTSNNSPSTDNDSIS) show a composition bias toward low complexity. Residue Ser416 is modified to Phosphoserine. Asp461 (for protease activity; shared with dimeric partner) is an active-site residue. Residues 583–640 (NVHTSESTRKYPYPFIHRMLAHANAQTIRYSLKNNTITYFNESDVDWSSAIDYQCPDC) are integrase-type zinc finger-like. In terms of domain architecture, Integrase catalytic spans 660-835 (NSYEPFQYLH…AGLDISTLLP (176 aa)). Positions 671 and 736 each coordinate Mg(2+). Disordered regions lie at residues 956-1087 (SKAV…ETEK), 1092-1111 (RSPSIDASPPENNSSHNIVP), and 1130-1186 (DLPL…EDNE). The segment covering 960 to 969 (SPTDSTPPST) has biased composition (low complexity). Polar residues predominate over residues 1005-1015 (STPQISNIEST). Over residues 1038–1053 (ESSHASKSKDFRHSDS) the composition is skewed to basic and acidic residues. Composition is skewed to polar residues over residues 1054 to 1082 (YSENETNHTNVPISSTGGTNNKTVPQISD) and 1101 to 1111 (PENNSSHNIVP). The Bipartite nuclear localization signal motif lies at 1178 to 1212 (KKRSLEDNETEIKVSRDTWNTKNMRSLEPPRSKKR). The region spanning 1338–1476 (NNYYITQLDI…DILGLEIKYQ (139 aa)) is the Reverse transcriptase Ty1/copia-type domain. Mg(2+) is bound by residues Asp1346, Asp1427, Asp1428, Asp1610, Glu1652, and Asp1685. The RNase H Ty1/copia-type domain maps to 1610-1752 (DASYGNQPYY…IKTFKLLTNK (143 aa)).

As to quaternary structure, the capsid protein forms a homotrimer, from which the VLPs are assembled. The protease is a homodimer, whose active site consists of two apposed aspartic acid residues. Post-translationally, initially, virus-like particles (VLPs) are composed of the structural unprocessed proteins Gag and Gag-Pol, and also contain the host initiator methionine tRNA (tRNA(i)-Met) which serves as a primer for minus-strand DNA synthesis, and a dimer of genomic Ty RNA. Processing of the polyproteins occurs within the particle and proceeds by an ordered pathway, called maturation. First, the protease (PR) is released by autocatalytic cleavage of the Gag-Pol polyprotein yielding capsid protein p45 and a Pol-p154 precursor protein. This cleavage is a prerequisite for subsequent processing of Pol-p154 at the remaining sites to release the mature structural and catalytic proteins. Maturation takes place prior to the RT reaction and is required to produce transposition-competent VLPs.

The protein resides in the cytoplasm. It localises to the nucleus. It carries out the reaction DNA(n) + a 2'-deoxyribonucleoside 5'-triphosphate = DNA(n+1) + diphosphate. The catalysed reaction is Endonucleolytic cleavage to 5'-phosphomonoester.. In terms of biological role, capsid protein (CA) is the structural component of the virus-like particle (VLP), forming the shell that encapsulates the retrotransposons dimeric RNA genome. The particles are assembled from trimer-clustered units and there are holes in the capsid shells that allow for the diffusion of macromolecules. CA also has nucleocapsid-like chaperone activity, promoting primer tRNA(i)-Met annealing to the multipartite primer-binding site (PBS), dimerization of Ty1 RNA and initiation of reverse transcription. Its function is as follows. The aspartyl protease (PR) mediates the proteolytic cleavages of the Gag and Gag-Pol polyproteins after assembly of the VLP. Functionally, reverse transcriptase/ribonuclease H (RT) is a multifunctional enzyme that catalyzes the conversion of the retro-elements RNA genome into dsDNA within the VLP. The enzyme displays a DNA polymerase activity that can copy either DNA or RNA templates, and a ribonuclease H (RNase H) activity that cleaves the RNA strand of RNA-DNA heteroduplexes during plus-strand synthesis and hydrolyzes RNA primers. The conversion leads to a linear dsDNA copy of the retrotransposon that includes long terminal repeats (LTRs) at both ends. Integrase (IN) targets the VLP to the nucleus, where a subparticle preintegration complex (PIC) containing at least integrase and the newly synthesized dsDNA copy of the retrotransposon must transit the nuclear membrane. Once in the nucleus, integrase performs the integration of the dsDNA into the host genome. The protein is Transposon Ty1-MR2 Gag-Pol polyprotein (TY1B-MR2) of Saccharomyces cerevisiae (strain ATCC 204508 / S288c) (Baker's yeast).